The chain runs to 697 residues: MADLEKILERLGISPEKRCQVIKKEQVVRNMEKIFLGRDLSNRLLYTLACIAPKNADLGLLADLVDARVIKHESMLKECLRYTEKKDVSMEEMTRFVKRNEVSSEDVRKFVAKMRSDRVAKKDMVSKARKAMPCADFRVVVEEINKVPDDVDGGDEKRPLEGGWLEEGEIKKLPKPSEIPQINEEIRQAHLRRTGGRVVTRFPPEPNGILHIGHAKAINLNFEYAKKFGGYTYLRYDDTNPKNEEAEYFDSIYEDVRWLGFEPYKVTASSDYFDKMTEFGFQLIRKGKAYVCHLSQDEICERRRQYVSDGTNDRSHLSQYRDRPVSENLRLFQEMVDGKWEEGKACLRFKMDTDTKNPLMLDLVGIRILDVVHPRKNVKYTVYPTYEFALCVSDSLEDVTHSFCTREFYTRQESYNWLLVQLEIYKPIQWEFSRLNISNTVLSKRKLLPLKKYGIELDDPRLFTIKGMRRRGFPPEAINQFCRSLGFTFAETTVDVKKLENFVRDNLNRTSRRIMCVKEPLKVTIMNSTPCSISIPDLPGSSVVRDVPFTPVIYIEKSDFMEKGDKDFLRLTPEQPVGLYMLYPIRVVKVTPDGIVAERWDGVPRKFIHWVSEDSVEVEMRMYSSLWTSFSPKDATYLEEMNKDSLKVFHGLCDKRISDARIEDRFQFQRIGYFCVDKDTTKENIVVNLTIPLKNIA.

Positions 204–214 match the 'HIGH' region motif; it reads PEPNGILHIGH. ATP contacts are provided by residues 205–207 and 211–217; these read EPN and HIGHAKA. L-glutamine contacts are provided by Asp-237 and Tyr-386. Residues Thr-405, 434–435, and 442–444 contribute to the ATP site; these read RL and LSK. The short motif at 441–445 is the 'KMSKS' region element; sequence VLSKR.

Belongs to the class-I aminoacyl-tRNA synthetase family.

The enzyme catalyses tRNA(Gln) + L-glutamine + ATP = L-glutaminyl-tRNA(Gln) + AMP + diphosphate. This is Probable glutamine--tRNA ligase from Encephalitozoon cuniculi (strain GB-M1) (Microsporidian parasite).